The following is a 766-amino-acid chain: Single-minded homolog 1 (766 aa).

Positions 1–53 (MKEKSKNAARTRREKENSEFYELAKLLPLPSAITSQLDKASIIRLTTSYLKMR) constitute a bHLH domain. 2 PAS domains span residues 77–147 (GREL…QPYH) and 218–288 (PPSA…LVKG). The PAC domain maps to 292-335 (TKYYRFLAKHGGWVWVQSYATIVHNSRSSRPHCIVSVNYVLTDT). The 431-residue stretch at 336-766 (EYKGLQLSLD…GTSVIITNGS (431 aa)) folds into the Single-minded C-terminal domain. Over residues 353–365 (AFSYTSSSTPTMT) the composition is skewed to polar residues. Disordered stretches follow at residues 353-431 (AFSY…SQHD) and 528-563 (WDEDSVVSSPDPGSASESGDRYRTEQYQSSPHEPSK). Residues 368–387 (RKGAKSRLSSSKSKSRTSPY) carry the Nuclear localization signal motif. The segment covering 373–385 (SRLSSSKSKSRTS) has biased composition (low complexity). A compositionally biased stretch (basic and acidic residues) spans 394–404 (HTERSESDHDS).

As to quaternary structure, efficient DNA binding requires dimerization with another bHLH protein. Heterodimer; forms a heterodimer with ARNT, ARNT2.

The protein localises to the nucleus. Functionally, transcriptional factor that may have pleiotropic effects during embryogenesis and in the adult. The chain is Single-minded homolog 1 (SIM1) from Pan paniscus (Pygmy chimpanzee).